A 233-amino-acid chain; its full sequence is LexA repressor (233 aa).

Residues 26-46 (FDEMKDALDLRSKSGIHRLIT) constitute a DNA-binding region (H-T-H motif). Residues Ser-154 and Lys-192 each act as for autocatalytic cleavage activity in the active site.

It belongs to the peptidase S24 family. In terms of assembly, homodimer.

The enzyme catalyses Hydrolysis of Ala-|-Gly bond in repressor LexA.. In terms of biological role, represses a number of genes involved in the response to DNA damage (SOS response), including recA and lexA. In the presence of single-stranded DNA, RecA interacts with LexA causing an autocatalytic cleavage which disrupts the DNA-binding part of LexA, leading to derepression of the SOS regulon and eventually DNA repair. This chain is LexA repressor, found in Nitrobacter hamburgensis (strain DSM 10229 / NCIMB 13809 / X14).